The primary structure comprises 111 residues: Small ribosomal subunit protein uS17 (111 aa).

It belongs to the universal ribosomal protein uS17 family. As to quaternary structure, part of the 30S ribosomal subunit.

Its function is as follows. One of the primary rRNA binding proteins, it binds specifically to the 5'-end of 16S ribosomal RNA. This is Small ribosomal subunit protein uS17 from Archaeoglobus fulgidus (strain ATCC 49558 / DSM 4304 / JCM 9628 / NBRC 100126 / VC-16).